Consider the following 844-residue polypeptide: Probable inorganic carbon transporter subunit DabA 1 (844 aa).

Zn(2+)-binding residues include Cys-359, Asp-361, His-543, and Cys-558.

It belongs to the inorganic carbon transporter (TC 9.A.2) DabA family. As to quaternary structure, forms a complex with DabB. The cofactor is Zn(2+).

The protein resides in the cell inner membrane. Its function is as follows. Part of an energy-coupled inorganic carbon pump. This Bradyrhizobium sp. (strain BTAi1 / ATCC BAA-1182) protein is Probable inorganic carbon transporter subunit DabA 1.